The primary structure comprises 719 residues: Alpha-galactosidase 2 (719 aa).

Aspartate 472 (nucleophile) is an active-site residue. Catalysis depends on aspartate 542, which acts as the Proton donor.

This sequence belongs to the glycosyl hydrolase 36 family.

It catalyses the reaction Hydrolysis of terminal, non-reducing alpha-D-galactose residues in alpha-D-galactosides, including galactose oligosaccharides, galactomannans and galactolipids.. Its function is as follows. Alpha-galactosidase associated with the sucrase operon. The protein is Alpha-galactosidase 2 (agaS) of Pediococcus pentosaceus.